The sequence spans 453 residues: tRNA modification GTPase MnmE (453 aa).

Residues R22, E79, and K119 each contribute to the (6S)-5-formyl-5,6,7,8-tetrahydrofolate site. The TrmE-type G domain occupies 215-376; that stretch reads GMKVVIAGRP…LKQHLKSLMG (162 aa). N225 contacts K(+). Residues 225 to 230, 244 to 250, 269 to 272, and 334 to 337 each bind GTP; these read NAGKSS, TEIAGTT, DTAG, and NKAD. Residue S229 participates in Mg(2+) binding. T244, I246, and T249 together coordinate K(+). T250 lines the Mg(2+) pocket. Position 453 (K453) interacts with (6S)-5-formyl-5,6,7,8-tetrahydrofolate.

This sequence belongs to the TRAFAC class TrmE-Era-EngA-EngB-Septin-like GTPase superfamily. TrmE GTPase family. In terms of assembly, homodimer. Heterotetramer of two MnmE and two MnmG subunits. It depends on K(+) as a cofactor.

It is found in the cytoplasm. In terms of biological role, exhibits a very high intrinsic GTPase hydrolysis rate. Involved in the addition of a carboxymethylaminomethyl (cmnm) group at the wobble position (U34) of certain tRNAs, forming tRNA-cmnm(5)s(2)U34. The protein is tRNA modification GTPase MnmE of Shewanella baltica (strain OS155 / ATCC BAA-1091).